The following is a 225-amino-acid chain: 2-C-methyl-D-erythritol 4-phosphate cytidylyltransferase (225 aa).

Belongs to the IspD/TarI cytidylyltransferase family. IspD subfamily.

The catalysed reaction is 2-C-methyl-D-erythritol 4-phosphate + CTP + H(+) = 4-CDP-2-C-methyl-D-erythritol + diphosphate. It functions in the pathway isoprenoid biosynthesis; isopentenyl diphosphate biosynthesis via DXP pathway; isopentenyl diphosphate from 1-deoxy-D-xylulose 5-phosphate: step 2/6. In terms of biological role, catalyzes the formation of 4-diphosphocytidyl-2-C-methyl-D-erythritol from CTP and 2-C-methyl-D-erythritol 4-phosphate (MEP). This is 2-C-methyl-D-erythritol 4-phosphate cytidylyltransferase from Haemophilus influenzae (strain PittEE).